A 503-amino-acid polypeptide reads, in one-letter code: Activin receptor type-1-like (503 aa).

Positions 1–21 (MTLGSPRRGLLMLLMALVTQG) are cleaved as a signal peptide. Residues 22-118 (DPVKPSRGPL…PSEQPGTDGQ (97 aa)) are Extracellular-facing. 3 disulfides stabilise this stretch: cysteine 34-cysteine 51, cysteine 36-cysteine 41, and cysteine 46-cysteine 69. The segment at 73–76 (HREL) is mediates specificity for BMP ligand. 2 disulfides stabilise this stretch: cysteine 77/cysteine 89 and cysteine 90/cysteine 95. A glycan (N-linked (GlcNAc...) asparagine) is linked at asparagine 98. The helical transmembrane segment at 119 to 141 (LALILGPVLALLALVALGVLGLW) threads the bilayer. Residues 142 to 503 (HVRRRQEKQR…NSPEKPKVIQ (362 aa)) are Cytoplasmic-facing. A phosphoserine mark is found at serine 155, serine 160, and serine 161. Positions 172-201 (SMLGDLLDSDCTTGSGSGLPFLVQRTVARQ) constitute a GS domain. A Protein kinase domain is found at 202–492 (VALVECVGKG…LRIKKTLQKI (291 aa)). ATP is bound by residues 208-216 (VGKGRYGEV) and lysine 229. The active-site Proton acceptor is aspartate 330.

Belongs to the protein kinase superfamily. TKL Ser/Thr protein kinase family. TGFB receptor subfamily. Interacts with TSC22D1/TSC-22. Requires Mg(2+) as cofactor. Mn(2+) is required as a cofactor.

Its subcellular location is the cell membrane. The catalysed reaction is L-threonyl-[receptor-protein] + ATP = O-phospho-L-threonyl-[receptor-protein] + ADP + H(+). The enzyme catalyses L-seryl-[receptor-protein] + ATP = O-phospho-L-seryl-[receptor-protein] + ADP + H(+). Functionally, type I receptor for TGF-beta family ligands BMP9/GDF2 and BMP10 and important regulator of normal blood vessel development. On ligand binding, forms a receptor complex consisting of two type II and two type I transmembrane serine/threonine kinases. Type II receptors phosphorylate and activate type I receptors which autophosphorylate, then bind and activate SMAD transcriptional regulators. May bind activin as well. This is Activin receptor type-1-like (ACVRL1) from Pongo abelii (Sumatran orangutan).